The primary structure comprises 192 residues: Erythropoietin (192 aa).

Positions 1–26 (MGVRECPALLLLLSLLLPPLGLPALG) are cleaved as a signal peptide. Intrachain disulfides connect cysteine 33/cysteine 187 and cysteine 55/cysteine 59. A glycan (N-linked (GlcNAc...) asparagine) is linked at asparagine 50. N-linked (GlcNAc...) asparagine glycans are attached at residues asparagine 64 and asparagine 109.

The protein belongs to the EPO/TPO family.

It localises to the secreted. In terms of biological role, hormone involved in the regulation of erythrocyte proliferation and differentiation and the maintenance of a physiological level of circulating erythrocyte mass. Binds to EPOR leading to EPOR dimerization and JAK2 activation thereby activating specific downstream effectors, including STAT1 and STAT3. This Equus caballus (Horse) protein is Erythropoietin (EPO).